The primary structure comprises 422 residues: Beta-1,3-galactosyltransferase 2 (422 aa).

Topologically, residues 1–24 (MLQWRRRHCCFAKMTWNAKRSLFR) are cytoplasmic. Residues 25 to 45 (THLIGVLSLVFLFAMFLFFNH) form a helical; Signal-anchor for type II membrane protein membrane-spanning segment. Residues 46 to 422 (HDWLPGRAGF…AGRYRHRKLH (377 aa)) are Lumenal-facing. N-linked (GlcNAc...) asparagine glycans are attached at residues Asn-75, Asn-100, Asn-119, Asn-176, and Asn-226. The interval 90–110 (TLRPQTATNSNNTDLSPQGVT) is disordered.

It belongs to the glycosyltransferase 31 family. It depends on Mn(2+) as a cofactor. As to expression, detected in heart and brain.

The protein resides in the golgi apparatus membrane. It carries out the reaction an N-acetyl-beta-D-glucosaminyl derivative + UDP-alpha-D-galactose = a beta-D-galactosyl-(1-&gt;3)-N-acetyl-beta-D-glucosaminyl derivative + UDP + H(+). It catalyses the reaction a beta-D-GlcNAc-(1-&gt;3)-beta-D-Gal-(1-&gt;4)-beta-D-Glc-(1&lt;-&gt;1)-Cer(d18:1(4E)) + UDP-alpha-D-galactose = a beta-D-Gal-(1-&gt;3)-beta-D-GlcNAc-(1-&gt;3)-beta-D-Gal-(1-&gt;4)-beta-D-Glc-(1&lt;-&gt;1')-Cer(d18:1(4E)) + UDP + H(+). The enzyme catalyses a neolactoside IV(3)-beta-GlcNAc-nLc4Cer(d18:1(4E)) + UDP-alpha-D-galactose = a neolactoside IV(3)-beta-[Gal-beta-(1-&gt;3)-GlcNAc]-nLc4Cer(d18:1(4E)) + UDP + H(+). It functions in the pathway protein modification; protein glycosylation. Beta-1,3-galactosyltransferase that transfers galactose from UDP-galactose to substrates with a terminal beta-N-acetylglucosamine (beta-GlcNAc) residue. Can also utilize substrates with a terminal galactose residue, albeit with lower efficiency. Involved in the biosynthesis of the carbohydrate moieties of glycolipids and glycoproteins. Inactive towards substrates with terminal alpha-N-acetylglucosamine (alpha-GlcNAc) or alpha-N-acetylgalactosamine (alpha-GalNAc) residues. The protein is Beta-1,3-galactosyltransferase 2 of Homo sapiens (Human).